The following is a 410-amino-acid chain: MQSPIHVTSEIGKLKTVMLHRPGKEIENVYPEILHRMLVDDIPYLPIAQEEHDLFAQTLRDNGAEVLYLEDLLTDALADDNIKDEFLEKIIAESGYAAGAIHDGLKEFLLSFSTKDMVNKIIAGVRKDEIKTKYASLAELAEDKDYPFYMDPMPNAYFTRDQQACIGDGITINHMTFKARQRESLFTEYIIKHNKRFADKGVEVWRNRYPEGRIEGGDELVLSDHVLAIGISQRTSAKAITELAESLFEKSDYDTVIAIHIPHNHAMMHLDTVFTMINYDQFTVHPAILRDGGHVDAYIMHPGNNGEISITHETNLKEILKKALDKPEIDLIPTGGGDPIIAPREQWNDGSNTLAIAPGVVVTYDRNYVSNDLLRKHGILVHEVRSSELSRGRGGPRCMSCPIVREDLKK.

The active-site Amidino-cysteine intermediate is Cys398.

This sequence belongs to the arginine deiminase family.

The protein resides in the cytoplasm. It carries out the reaction L-arginine + H2O = L-citrulline + NH4(+). The protein operates within amino-acid degradation; L-arginine degradation via ADI pathway; carbamoyl phosphate from L-arginine: step 1/2. This chain is Arginine deiminase, found in Limosilactobacillus reuteri (strain DSM 20016) (Lactobacillus reuteri).